A 259-amino-acid polypeptide reads, in one-letter code: Eukaryotic translation initiation factor 3 subunit J (259 aa).

A sufficient for interaction with EIF3B region spans residues 1–70 (MAAAAAAAAG…KEEAEVKPEV (70 aa)). Residues 1–111 (MAAAAAAAAG…EPEESKVLTP (111 aa)) are disordered. Ser12, Ser14, and Ser21 each carry phosphoserine. Residues 41–62 (EGEDEDEDVKDNWDDDDDENKE) show a composition bias toward acidic residues. Positions 63-107 (EAEVKPEVKISEKKKIAEKIKEKERQQKKRQEEIKKRLEEPEESK) are enriched in basic and acidic residues. The stretch at 71–136 (KISEKKKIAE…ESDLELAKET (66 aa)) forms a coiled coil. Lys107 is covalently cross-linked (Glycyl lysine isopeptide (Lys-Gly) (interchain with G-Cter in SUMO2)). At Thr110 the chain carries Phosphothreonine. Ser128 is modified (phosphoserine). The segment at 218-247 (SKAKKKKKGVVPGGGLKATMKDDLADYGGY) is disordered. The interval 244–259 (YGGYDGGYVQDYEDFM) is promotes stable association with the 40S ribosome. A Phosphotyrosine modification is found at Tyr255.

Belongs to the eIF-3 subunit J family. Component of the eukaryotic translation initiation factor 3 (eIF-3) complex, which is composed of 13 subunits: EIF3A, EIF3B, EIF3C, EIF3D, EIF3E, EIF3F, EIF3G, EIF3H, EIF3I, EIF3J, EIF3K, EIF3L and EIF3M. The eIF-3 complex appears to include 3 stable modules: module A is composed of EIF3A, EIF3B, EIF3G and EIF3I; module B is composed of EIF3F, EIF3H, and EIF3M; and module C is composed of EIF3C, EIF3D, EIF3E, EIF3K and EIF3L. EIF3C of module C binds EIF3B of module A and EIF3H of module B, thereby linking the three modules. EIF3J is a labile subunit that binds to the eIF-3 complex via EIF3B. The eIF-3 complex interacts with RPS6KB1 under conditions of nutrient depletion. Mitogenic stimulation leads to binding and activation of a complex composed of MTOR and RPTOR, leading to phosphorylation and release of RPS6KB1 and binding of EIF4B to eIF-3. In terms of processing, phosphorylated. Phosphorylation is enhanced upon serum stimulation.

The protein localises to the cytoplasm. In terms of biological role, component of the eukaryotic translation initiation factor 3 (eIF-3) complex, which is required for several steps in the initiation of protein synthesis. The eIF-3 complex associates with the 40S ribosome and facilitates the recruitment of eIF-1, eIF-1A, eIF-2:GTP:methionyl-tRNAi and eIF-5 to form the 43S pre-initiation complex (43S PIC). The eIF-3 complex stimulates mRNA recruitment to the 43S PIC and scanning of the mRNA for AUG recognition. The eIF-3 complex is also required for disassembly and recycling of post-termination ribosomal complexes and subsequently prevents premature joining of the 40S and 60S ribosomal subunits prior to initiation. The eIF-3 complex specifically targets and initiates translation of a subset of mRNAs involved in cell proliferation, including cell cycling, differentiation and apoptosis, and uses different modes of RNA stem-loop binding to exert either translational activation or repression. This subunit binds directly within the mRNA entry channel of the 40S ribosome to the aminoacyl (A) site. It may regulate the interaction between the 43S PIC and mRNA. The sequence is that of Eukaryotic translation initiation factor 3 subunit J (Eif3j) from Rattus norvegicus (Rat).